The chain runs to 1849 residues: NADH-ubiquinone oxidoreductase chain 5 (1849 aa).

The next 41 membrane-spanning stretches (helical) occupy residues 76 to 93 (YLLL…TVCY), 98 to 120 (LILL…YLQY), 190 to 212 (YWLC…IIGW), 222 to 244 (LVPT…IYLY), 279 to 301 (HLLT…ILSS), 316 to 338 (LALQ…ILCY), 358 to 380 (LEII…ILSV), 390 to 412 (VIIL…TILI), 419 to 441 (IAVY…IWLL), 483 to 505 (LLDA…CLGV), 510 to 532 (LFIA…LQVV), 536 to 558 (ISYI…VYSI), 565 to 587 (LIMY…IHTI), 621 to 640 (IWLI…STLV), 683 to 705 (WVRF…YVQF), 718 to 740 (LTRI…QGIL), 745 to 767 (IISY…LTIL), 797 to 819 (PTWV…LVTV), 868 to 890 (ILLL…LLSL), 905 to 927 (LTVQ…YIVL), 966 to 988 (LYSY…SLLE), 1008 to 1030 (PDLL…ELLL), 1073 to 1095 (LTVV…QILF), 1105 to 1127 (LATI…LSYL), 1172 to 1194 (TYLL…IYII), 1219 to 1241 (VYFL…FFYH), 1248 to 1270 (GIFY…TLYY), 1296 to 1318 (IITF…AIIL), 1330 to 1352 (FAYN…IVSY), 1357 to 1379 (MIIF…YARI), 1418 to 1440 (LFAL…FDFT), 1444 to 1466 (VIVF…FVWL), 1478 to 1500 (ALIH…APIL), 1504 to 1526 (VYTL…ILAT), 1533 to 1555 (KAVA…FLAF), 1559 to 1581 (LIYL…YIVH), 1602 to 1624 (IAIY…GFFA), 1639 to 1661 (VATF…LYRI), 1719 to 1741 (LLHL…LVTG), 1773 to 1795 (VRNI…TAIN), and 1802 to 1824 (IIYL…HYFL).

It belongs to the complex I subunit 5 family.

It is found in the hydrogenosome membrane. It carries out the reaction a ubiquinone + NADH + 5 H(+)(in) = a ubiquinol + NAD(+) + 4 H(+)(out). The sequence is that of NADH-ubiquinone oxidoreductase chain 5 (nad5) from Nyctotherus ovalis.